The chain runs to 336 residues: Phosphate acyltransferase (336 aa).

Belongs to the PlsX family. Homodimer. Probably interacts with PlsY.

It localises to the cytoplasm. The catalysed reaction is a fatty acyl-[ACP] + phosphate = an acyl phosphate + holo-[ACP]. The protein operates within lipid metabolism; phospholipid metabolism. In terms of biological role, catalyzes the reversible formation of acyl-phosphate (acyl-PO(4)) from acyl-[acyl-carrier-protein] (acyl-ACP). This enzyme utilizes acyl-ACP as fatty acyl donor, but not acyl-CoA. The chain is Phosphate acyltransferase from Pseudomonas fluorescens (strain Pf0-1).